The primary structure comprises 385 residues: Meiotic recombination protein SPO11-2 (385 aa).

Positions 24 to 169 (LPPAEVRARI…LGIMASSRGA (146 aa)) constitute a Topo IIA-type catalytic domain. Residue Tyr126 is the O-(5'-phospho-DNA)-tyrosine intermediate of the active site. 2 residues coordinate Mg(2+): Glu219 and Asp272.

This sequence belongs to the TOP6A family. In terms of assembly, interacts with TOP6B. The cofactor is Mg(2+).

It localises to the nucleus. The enzyme catalyses ATP-dependent breakage, passage and rejoining of double-stranded DNA.. In terms of biological role, required for meiotic recombination. Mediates DNA cleavage that forms the double-strand breaks (DSB) that initiate meiotic recombination. In Oryza sativa subsp. japonica (Rice), this protein is Meiotic recombination protein SPO11-2 (SPO11-2).